The primary structure comprises 313 residues: Olfactory receptor 1G1 (313 aa).

Residues 1-25 are Extracellular-facing; it reads MEGKNLTSISEFFLLGFSEQLEEQK. The N-linked (GlcNAc...) asparagine glycan is linked to asparagine 5. The chain crosses the membrane as a helical span at residues 26–49; that stretch reads ALFGSFLFMYLVMVAGNLLIILVI. Residues 50–57 lie on the Cytoplasmic side of the membrane; it reads ITDTQLHT. A helical transmembrane segment spans residues 58 to 79; that stretch reads PMYFFLANLSLADACFVSTTVP. Topologically, residues 80–100 are extracellular; the sequence is KMLANIQIQSQAISYSGCLLQ. Cysteine 97 and cysteine 189 are disulfide-bonded. The helical transmembrane segment at 101-120 threads the bilayer; it reads LYFFMLFVMLEAFLLAVMAY. Residues 121 to 140 are Cytoplasmic-facing; the sequence is DHYVAICHPLHYILIMSPGL. The chain crosses the membrane as a helical span at residues 141–158; sequence CVFLVSASWIMNALYSLL. Over 159–196 the chain is Extracellular; sequence HTLLMNSLSFCANHEIPHFFCDIDPLLSLSCADPFTNE. A helical membrane pass occupies residues 197–219; sequence LVIFITGGLTGLICVLCLIISYT. Over 220–236 the chain is Cytoplasmic; sequence NVFSTILKIPSAQGKRK. The chain crosses the membrane as a helical span at residues 237–259; the sequence is AFSTCSSHLSVVSLFXGTSFCVY. The Extracellular portion of the chain corresponds to 260–272; sequence FSPPSTRXAQKDT. A helical transmembrane segment spans residues 273-292; that stretch reads VASVMYTVVTPMLNPFIYSL. Residues 293-313 lie on the Cytoplasmic side of the membrane; that stretch reads RNQEIKSSLRKLIWVRKIHSP.

This sequence belongs to the G-protein coupled receptor 1 family.

It localises to the cell membrane. In terms of biological role, odorant receptor. The polypeptide is Olfactory receptor 1G1 (OR1G1) (Pan troglodytes (Chimpanzee)).